The chain runs to 299 residues: 4-hydroxy-tetrahydrodipicolinate synthase (299 aa).

Thr44 lines the pyruvate pocket. Tyr133 functions as the Proton donor/acceptor in the catalytic mechanism. Lys162 serves as the catalytic Schiff-base intermediate with substrate. Ile204 is a pyruvate binding site.

It belongs to the DapA family. In terms of assembly, homotetramer; dimer of dimers.

It localises to the cytoplasm. It carries out the reaction L-aspartate 4-semialdehyde + pyruvate = (2S,4S)-4-hydroxy-2,3,4,5-tetrahydrodipicolinate + H2O + H(+). It participates in amino-acid biosynthesis; L-lysine biosynthesis via DAP pathway; (S)-tetrahydrodipicolinate from L-aspartate: step 3/4. Its function is as follows. Catalyzes the condensation of (S)-aspartate-beta-semialdehyde [(S)-ASA] and pyruvate to 4-hydroxy-tetrahydrodipicolinate (HTPA). This chain is 4-hydroxy-tetrahydrodipicolinate synthase, found in Thermus thermophilus (strain ATCC 27634 / DSM 579 / HB8).